The chain runs to 114 residues: Immunoglobulin kappa variable 6D-21 (114 aa).

An N-terminal signal peptide occupies residues 1–19 (MSPSQLIGFLLLWVPASRG). The tract at residues 20 to 42 (EIVLTQSPDFQSVTPKEKVTITC) is framework-1. One can recognise an Ig-like domain in the interval 20–114 (EIVLTQSPDF…YYCHQSSSLP (95 aa)). The cysteines at positions 42 and 107 are disulfide-linked. The segment at 43–53 (RASQSIGSSLH) is complementarity-determining-1. Residues 54–68 (WYQQKPDQSPKLLIK) form a framework-2 region. Residues 69 to 75 (YASQSIS) form a complementarity-determining-2 region. Positions 76 to 107 (GVPSRFSGSGSGTDFTLTINSLEAEDAAAYYC) are framework-3. The segment at 108–114 (HQSSSLP) is complementarity-determining-3.

As to quaternary structure, immunoglobulins are composed of two identical heavy chains and two identical light chains; disulfide-linked.

Its subcellular location is the secreted. The protein localises to the cell membrane. Functionally, v region of the variable domain of immunoglobulin light chains that participates in the antigen recognition. Immunoglobulins, also known as antibodies, are membrane-bound or secreted glycoproteins produced by B lymphocytes. In the recognition phase of humoral immunity, the membrane-bound immunoglobulins serve as receptors which, upon binding of a specific antigen, trigger the clonal expansion and differentiation of B lymphocytes into immunoglobulins-secreting plasma cells. Secreted immunoglobulins mediate the effector phase of humoral immunity, which results in the elimination of bound antigens. The antigen binding site is formed by the variable domain of one heavy chain, together with that of its associated light chain. Thus, each immunoglobulin has two antigen binding sites with remarkable affinity for a particular antigen. The variable domains are assembled by a process called V-(D)-J rearrangement and can then be subjected to somatic hypermutations which, after exposure to antigen and selection, allow affinity maturation for a particular antigen. The protein is Immunoglobulin kappa variable 6D-21 of Homo sapiens (Human).